Here is a 114-residue protein sequence, read N- to C-terminus: Large ribosomal subunit protein bL17 (114 aa).

It belongs to the bacterial ribosomal protein bL17 family. In terms of assembly, part of the 50S ribosomal subunit. Contacts protein L32.

This chain is Large ribosomal subunit protein bL17, found in Clostridium acetobutylicum (strain ATCC 824 / DSM 792 / JCM 1419 / IAM 19013 / LMG 5710 / NBRC 13948 / NRRL B-527 / VKM B-1787 / 2291 / W).